The sequence spans 204 residues: NAD(P)H-quinone oxidoreductase subunit M, chloroplastic (204 aa).

The N-terminal 27 residues, methionine 1 to serine 27, are a transit peptide targeting the chloroplast.

This sequence belongs to the NDH complex subunit M family. In terms of assembly, part of the chloroplast NDH complex, composed of a mixture of chloroplast and nucleus encoded subunits. Component of the NDH subcomplex A, at least composed of ndhH, ndhI, ndhJ, ndhK, ndhL, ndhM, ndhN and ndhO.

The protein localises to the plastid. The protein resides in the chloroplast thylakoid membrane. The enzyme catalyses a plastoquinone + NADH + (n+1) H(+)(in) = a plastoquinol + NAD(+) + n H(+)(out). It catalyses the reaction a plastoquinone + NADPH + (n+1) H(+)(in) = a plastoquinol + NADP(+) + n H(+)(out). Its function is as follows. NDH shuttles electrons from NAD(P)H:plastoquinone, via FMN and iron-sulfur (Fe-S) centers, to quinones in the photosynthetic chain and possibly in a chloroplast respiratory chain. The immediate electron acceptor for the enzyme in this species is believed to be plastoquinone. Couples the redox reaction to proton translocation, and thus conserves the redox energy in a proton gradient. The sequence is that of NAD(P)H-quinone oxidoreductase subunit M, chloroplastic from Physcomitrium patens (Spreading-leaved earth moss).